We begin with the raw amino-acid sequence, 287 residues long: Phospholipid phosphatase 2 (287 aa).

Residues 1–4 lie on the Cytoplasmic side of the membrane; the sequence is MERR. A helical transmembrane segment spans residues 5–25; it reads WVFVLLDVLCVLVAALPCAIL. At 26–51 the chain is on the lumenal side; that stretch reads TFVNTPYKRGFYCGDDSIRYPYRPDT. The helical transmembrane segment at 52 to 72 threads the bilayer; it reads ITHGLMAGVIITATVILVSAG. The Cytoplasmic portion of the chain corresponds to 73–87; sequence EAYLVYTDRLYSRSD. Residues 88-108 traverse the membrane as a helical segment; it reads FNNYLAALYKVVGTFLFGAAV. Over 109 to 161 the chain is Lumenal; that stretch reads SQSLTDLAKYMTGRLRPNFLAVCDPDWSRVNCSAYVQVEVCRGSSANVTESRL. The phosphatase sequence motif I stretch occupies residues 117-125; that stretch reads KYMTGRLRP. N-linked (GlcNAc...) asparagine glycans are attached at residues N139 and N155. The chain crosses the membrane as a helical span at residues 162-182; that stretch reads SFYSGHSSFGMYCMVFLALYV. Residues 164-167 are phosphatase sequence motif II; sequence YSGH. H167 acts as the Proton donors in catalysis. The Cytoplasmic portion of the chain corresponds to 183–193; sequence QARLCWKWARL. A helical membrane pass occupies residues 194 to 211; it reads LRPTVQFFLVAFALYVGY. Topologically, residues 212 to 218 are lumenal; it reads TRVSDHK. Positions 212 to 223 are phosphatase sequence motif III; sequence TRVSDHKHHWSD. The active-site Nucleophile is the H219. The chain crosses the membrane as a helical span at residues 219-239; the sequence is HHWSDVLVGLLQGALVASLTV. Residues 240-287 lie on the Cytoplasmic side of the membrane; sequence RYISDFFKARPPQHCPEEEDLERKPSLSLTLALGETDCNHYGYPVSSS.

The protein belongs to the PA-phosphatase related phosphoesterase family. In terms of assembly, forms functional homodimers and homooligomers. Can also form heterooligomers with PLPP1 and PLPP3. In terms of processing, N-glycosylated.

Its subcellular location is the membrane. The protein resides in the cell membrane. It localises to the early endosome membrane. The protein localises to the endoplasmic reticulum membrane. The catalysed reaction is a 1,2-diacyl-sn-glycero-3-phosphate + H2O = a 1,2-diacyl-sn-glycerol + phosphate. It carries out the reaction 1,2-dihexadecanoyl-sn-glycero-3-phosphate + H2O = 1,2-dihexadecanoyl-sn-glycerol + phosphate. The enzyme catalyses 1,2-di-(9Z-octadecenoyl)-sn-glycero-3-phosphate + H2O = 1,2-di-(9Z-octadecenoyl)-sn-glycerol + phosphate. It catalyses the reaction a monoacyl-sn-glycero-3-phosphate + H2O = a monoacylglycerol + phosphate. The catalysed reaction is (9Z)-octadecenoyl-sn-glycero-3-phosphate + H2O = (9Z-octadecenoyl)-glycerol + phosphate. It carries out the reaction sphing-4-enine 1-phosphate + H2O = sphing-4-enine + phosphate. The enzyme catalyses an N-acylsphing-4-enine 1-phosphate + H2O = an N-acylsphing-4-enine + phosphate. It catalyses the reaction N-(octanoyl)-sphing-4-enine-1-phosphate + H2O = N-octanoylsphing-4-enine + phosphate. The catalysed reaction is N-(9Z-octadecenoyl)-ethanolamine phosphate + H2O = N-(9Z-octadecenoyl) ethanolamine + phosphate. The protein operates within lipid metabolism; phospholipid metabolism. With respect to regulation, magnesium-independent phospholipid phosphatase. Insensitive to N-ethylmaleimide. Functionally, magnesium-independent phospholipid phosphatase that catalyzes the dephosphorylation of a variety of glycerolipid and sphingolipid phosphate esters including phosphatidate/PA, lysophosphatidate/LPA, sphingosine 1-phosphate/S1P and ceramide 1-phosphate/C1P. Has no apparent extracellular phosphatase activity and therefore most probably acts intracellularly. Also acts on N-oleoyl ethanolamine phosphate/N-(9Z-octadecenoyl)-ethanolamine phosphate, a potential physiological compound. Through dephosphorylation of these bioactive lipid mediators produces new bioactive compounds and may regulate signal transduction in different cellular processes. Indirectly regulates, for instance, cell cycle G1/S phase transition through its phospholipid phosphatase activity. This is Phospholipid phosphatase 2 from Bos taurus (Bovine).